A 268-amino-acid polypeptide reads, in one-letter code: Eukaryotic translation initiation factor 2 subunit beta (268 aa).

Residues 1 to 12 (MADEINEIREEQ) show a composition bias toward basic and acidic residues. Residues 1-85 (MADEINEIRE…LNNESVDAGE (85 aa)) are disordered. The residue at position 2 (Ala-2) is an N-acetylalanine. Residues Ser-42, Ser-80, and Ser-112 each carry the phosphoserine; by CK2 modification. A C4-type zinc finger spans residues 222 to 246 (CLGCKSPDTILSKENRLFFLRCEKC).

Belongs to the eIF-2-beta/eIF-5 family. In terms of assembly, eukaryotic translation initiation factor 2 eIF2 is a heterotrimeric complex composed of an alpha, a beta and a gamma subunit. Post-translationally, phosphorylated at Ser-42, Ser-80 and Ser-112 by CK2.

Its subcellular location is the cytoplasm. It is found in the cytosol. Functionally, component of the eIF2 complex that functions in the early steps of protein synthesis by forming a ternary complex with GTP and initiator tRNA. This complex binds to a 40S ribosomal subunit, followed by mRNA binding to form a 43S pre-initiation complex (43S PIC). Junction of the 60S ribosomal subunit to form the 80S initiation complex is preceded by hydrolysis of the GTP bound to eIF2 and release of an eIF2-GDP binary complex. In order for eIF2 to recycle and catalyze another round of initiation, the GDP bound to eIF2 must exchange with GTP by way of a reaction catalyzed by eIF2B. The polypeptide is Eukaryotic translation initiation factor 2 subunit beta (Arabidopsis thaliana (Mouse-ear cress)).